The following is a 408-amino-acid chain: F-box A protein 155 (408 aa).

The disordered stretch occupies residues 1-22 (MSDRGSDQSSSSSDSAQHIPPK).

The protein belongs to the FTH family.

This Caenorhabditis elegans protein is F-box A protein 155 (fbxa-155).